An 82-amino-acid chain; its full sequence is Small ribosomal subunit protein bS18 (82 aa).

Residues 1–20 form a disordered region; sequence MVDINQIPTRRPFHRRRKTC.

It belongs to the bacterial ribosomal protein bS18 family. As to quaternary structure, part of the 30S ribosomal subunit. Forms a tight heterodimer with protein bS6.

Its function is as follows. Binds as a heterodimer with protein bS6 to the central domain of the 16S rRNA, where it helps stabilize the platform of the 30S subunit. The chain is Small ribosomal subunit protein bS18 from Mesorhizobium japonicum (strain LMG 29417 / CECT 9101 / MAFF 303099) (Mesorhizobium loti (strain MAFF 303099)).